The primary structure comprises 479 residues: Aspartyl/glutamyl-tRNA(Asn/Gln) amidotransferase subunit B (479 aa).

The protein belongs to the GatB/GatE family. GatB subfamily. As to quaternary structure, heterotrimer of A, B and C subunits.

The catalysed reaction is L-glutamyl-tRNA(Gln) + L-glutamine + ATP + H2O = L-glutaminyl-tRNA(Gln) + L-glutamate + ADP + phosphate + H(+). It catalyses the reaction L-aspartyl-tRNA(Asn) + L-glutamine + ATP + H2O = L-asparaginyl-tRNA(Asn) + L-glutamate + ADP + phosphate + 2 H(+). Functionally, allows the formation of correctly charged Asn-tRNA(Asn) or Gln-tRNA(Gln) through the transamidation of misacylated Asp-tRNA(Asn) or Glu-tRNA(Gln) in organisms which lack either or both of asparaginyl-tRNA or glutaminyl-tRNA synthetases. The reaction takes place in the presence of glutamine and ATP through an activated phospho-Asp-tRNA(Asn) or phospho-Glu-tRNA(Gln). This is Aspartyl/glutamyl-tRNA(Asn/Gln) amidotransferase subunit B from Streptococcus suis (strain 98HAH33).